A 198-amino-acid polypeptide reads, in one-letter code: Ion-translocating oxidoreductase complex subunit B (198 aa).

Residues 1-28 (MIITTVYFILVAIAVLALIFGAILGFAS) form a hydrophobic region. The 59-residue stretch at 34–92 (EADPIVEKIDALLPQSQCGQCGYPGCKPYAEAIANGDDITKCIPGGQTVIVNIAELMGV) folds into the 4Fe-4S domain. [4Fe-4S] cluster contacts are provided by cysteine 51, cysteine 54, cysteine 59, cysteine 75, cysteine 115, cysteine 118, cysteine 121, cysteine 125, cysteine 145, cysteine 148, cysteine 151, and cysteine 155. 4Fe-4S ferredoxin-type domains lie at 106–135 (MVAF…GTNK) and 136–165 (AMHT…MIKV).

The protein belongs to the 4Fe4S bacterial-type ferredoxin family. RnfB subfamily. In terms of assembly, the complex is composed of six subunits: RnfA, RnfB, RnfC, RnfD, RnfE and RnfG. [4Fe-4S] cluster serves as cofactor.

The protein localises to the cell inner membrane. Its function is as follows. Part of a membrane-bound complex that couples electron transfer with translocation of ions across the membrane. The protein is Ion-translocating oxidoreductase complex subunit B of Pasteurella multocida (strain Pm70).